A 295-amino-acid polypeptide reads, in one-letter code: Deleted in azoospermia-like (295 aa).

Residues 1–10 (MSTANPETPN) show a composition bias toward polar residues. The interval 1–25 (MSTANPETPNSTISREASTQSSSAA) is disordered. Residues 11 to 25 (STISREASTQSSSAA) are compositionally biased toward low complexity. The region spanning 40-115 (NTVFVGGIDV…KKLKLGPAIR (76 aa)) is the RRM domain. Residues 80 to 132 (KGYGFVSFFNDVDVQKIVESQINFHGKKLKLGPAIRKQNLCAYHVQPRPLVFN) are homodimerization. Residues 167 to 190 (AYPTYPNSPVQVITGYQLPVYNYQ) form the DAZ domain. The residue at position 276 (Tyr276) is a Phosphotyrosine.

The protein belongs to the RRM DAZ family. As to quaternary structure, homodimer and heterodimer. Multiple DAZL RRMs can bind to a single RNA containing multiple GUU triplets. Forms a heterodimer with DAZ. Interacts with BOLL, DAZAP1 and DAZAP2. Interacts with PUM2. As to expression, testis specific.

It localises to the cytoplasm. The protein localises to the nucleus. Its function is as follows. RNA-binding protein, which is essential for gametogenesis in both males and females. Plays a central role during spermatogenesis. Acts by binding to the 3'-UTR of mRNA, specifically recognizing GUU triplets, and thereby regulating the translation of key transcripts. This Homo sapiens (Human) protein is Deleted in azoospermia-like (DAZL).